Here is a 250-residue protein sequence, read N- to C-terminus: Flavin-dependent thymidylate synthase (250 aa).

Positions 7 to 233 constitute a ThyX domain; the sequence is LRVQLIAKTD…PAVFADFEVT (227 aa). FAD contacts are provided by residues S71, 95-97, and Q103; that span reads RHR. Residues 92 to 95, 103 to 107, and R172 each bind dUMP; these read ELIR and QLSQR. Positions 95 to 105 match the ThyX motif motif; sequence RHRHFSYSQLS. Residues 188 to 190 and H194 each bind FAD; that span reads NYR. R199 is a dUMP binding site. Catalysis depends on R199, which acts as the Involved in ionization of N3 of dUMP, leading to its activation.

Belongs to the thymidylate synthase ThyX family. As to quaternary structure, homotetramer. Requires FAD as cofactor.

The catalysed reaction is dUMP + (6R)-5,10-methylene-5,6,7,8-tetrahydrofolate + NADPH + H(+) = dTMP + (6S)-5,6,7,8-tetrahydrofolate + NADP(+). The protein operates within pyrimidine metabolism; dTTP biosynthesis. Its function is as follows. Catalyzes the reductive methylation of 2'-deoxyuridine-5'-monophosphate (dUMP) to 2'-deoxythymidine-5'-monophosphate (dTMP) while utilizing 5,10-methylenetetrahydrofolate (mTHF) as the methyl donor, and NADPH and FADH(2) as the reductant. The protein is Flavin-dependent thymidylate synthase of Mycobacterium bovis (strain ATCC BAA-935 / AF2122/97).